Reading from the N-terminus, the 468-residue chain is Soluble pyridine nucleotide transhydrogenase (468 aa).

36–45 (ERYKNVGGGC) serves as a coordination point for FAD.

The protein belongs to the class-I pyridine nucleotide-disulfide oxidoreductase family. Requires FAD as cofactor.

It is found in the cytoplasm. It carries out the reaction NAD(+) + NADPH = NADH + NADP(+). Functionally, conversion of NADPH, generated by peripheral catabolic pathways, to NADH, which can enter the respiratory chain for energy generation. This is Soluble pyridine nucleotide transhydrogenase from Hamiltonella defensa subsp. Acyrthosiphon pisum (strain 5AT).